The primary structure comprises 338 residues: Phenylalanine--tRNA ligase alpha subunit (338 aa).

Mg(2+) is bound at residue Glu-252.

This sequence belongs to the class-II aminoacyl-tRNA synthetase family. Phe-tRNA synthetase alpha subunit type 1 subfamily. As to quaternary structure, tetramer of two alpha and two beta subunits. Mg(2+) is required as a cofactor.

The protein resides in the cytoplasm. It carries out the reaction tRNA(Phe) + L-phenylalanine + ATP = L-phenylalanyl-tRNA(Phe) + AMP + diphosphate + H(+). The chain is Phenylalanine--tRNA ligase alpha subunit from Pseudomonas paraeruginosa (strain DSM 24068 / PA7) (Pseudomonas aeruginosa (strain PA7)).